The chain runs to 415 residues: Histidine--tRNA ligase (415 aa).

It belongs to the class-II aminoacyl-tRNA synthetase family. In terms of assembly, homodimer.

Its subcellular location is the cytoplasm. It carries out the reaction tRNA(His) + L-histidine + ATP = L-histidyl-tRNA(His) + AMP + diphosphate + H(+). The sequence is that of Histidine--tRNA ligase from Rickettsia akari (strain Hartford).